We begin with the raw amino-acid sequence, 398 residues long: G2/mitotic-specific cyclin-B2 (398 aa).

2 disordered regions span residues Met1 to Ser26 and Ala53 to Ala76. Thr8 bears the Phosphothreonine mark. Over residues Thr8–Lys23 the composition is skewed to polar residues. A compositionally biased stretch (low complexity) spans Asn55 to Asn69. Residues Ser77 and Ser92 each carry the phosphoserine modification. Thr94 carries the post-translational modification Phosphothreonine. A phosphoserine mark is found at Ser99, Ser392, and Ser398.

Belongs to the cyclin family. Cyclin AB subfamily. In terms of assembly, interacts with the CDK1 protein kinase to form a serine/threonine kinase holoenzyme complex also known as maturation promoting factor (MPF). The cyclin subunit imparts substrate specificity to the complex.

In terms of biological role, essential for the control of the cell cycle at the G2/M (mitosis) transition. The polypeptide is G2/mitotic-specific cyclin-B2 (CCNB2) (Bos taurus (Bovine)).